The sequence spans 490 residues: Cysteine--tRNA ligase (490 aa).

Cys36 is a binding site for Zn(2+). The 'HIGH' region signature appears at 38 to 48; that stretch reads VTVYDYSHIGH. Residues Cys216, His241, and Glu245 each coordinate Zn(2+). The short motif at 278 to 282 is the 'KMSKS' region element; that stretch reads KMSKS. Lys281 lines the ATP pocket.

The protein belongs to the class-I aminoacyl-tRNA synthetase family. Monomer. Zn(2+) serves as cofactor.

The protein localises to the cytoplasm. It carries out the reaction tRNA(Cys) + L-cysteine + ATP = L-cysteinyl-tRNA(Cys) + AMP + diphosphate. The chain is Cysteine--tRNA ligase from Magnetococcus marinus (strain ATCC BAA-1437 / JCM 17883 / MC-1).